A 356-amino-acid chain; its full sequence is Aminodeoxyfutalosine deaminase (356 aa).

His-18 and His-20 together coordinate Zn(2+). Substrate-binding residues include Arg-73, Glu-140, and Gly-172. A Zn(2+)-binding site is contributed by His-199. Catalysis depends on Glu-202, which acts as the Proton donor. A Zn(2+)-binding site is contributed by Asp-287.

The protein belongs to the metallo-dependent hydrolases superfamily. Adenosine and AMP deaminases family. Zn(2+) serves as cofactor.

The enzyme catalyses 6-amino-6-deoxyfutalosine + H2O + H(+) = futalosine + NH4(+). The protein operates within quinol/quinone metabolism; menaquinone biosynthesis. In terms of biological role, catalyzes the deamination of aminodeoxyfutalosine (AFL) into futalosine (FL), a step in the biosynthesis of menaquinone (MK, vitamin K2). Is very poorly efficient on 1-(6-amino-9H-purin-9-yl)-1-deoxy-N-ethyl-beta-D-ribofuranuronamide (NECA), adenosine, 5'-methylthioadenosine, 5'-deoxyadenosine, 2'-deoxyadenosine, and AMP as substrate. In Acidothermus cellulolyticus (strain ATCC 43068 / DSM 8971 / 11B), this protein is Aminodeoxyfutalosine deaminase.